We begin with the raw amino-acid sequence, 546 residues long: CTP synthase (546 aa).

The tract at residues 1-269 (MNPNTKIIFV…DAKLVELLNL (269 aa)) is amidoligase domain. A CTP-binding site is contributed by Ser16. Ser16 lines the UTP pocket. ATP is bound by residues 17–22 (SLGKGV) and Asp74. Mg(2+) contacts are provided by Asp74 and Glu143. Residues 150-152 (DIE), 190-195 (KTKPTQ), and Lys226 contribute to the CTP site. Residues 190–195 (KTKPTQ) and Lys226 each bind UTP. The region spanning 294 to 546 (TIAMVGKYVS…IHAAVEKSNK (253 aa)) is the Glutamine amidotransferase type-1 domain. Gly356 contributes to the L-glutamine binding site. The active-site Nucleophile; for glutamine hydrolysis is Cys383. Residues 384-387 (LGMQ), Glu407, and Arg474 each bind L-glutamine. Catalysis depends on residues His519 and Glu521.

The protein belongs to the CTP synthase family. In terms of assembly, homotetramer.

It carries out the reaction UTP + L-glutamine + ATP + H2O = CTP + L-glutamate + ADP + phosphate + 2 H(+). The enzyme catalyses L-glutamine + H2O = L-glutamate + NH4(+). It catalyses the reaction UTP + NH4(+) + ATP = CTP + ADP + phosphate + 2 H(+). Its pathway is pyrimidine metabolism; CTP biosynthesis via de novo pathway; CTP from UDP: step 2/2. Allosterically activated by GTP, when glutamine is the substrate; GTP has no effect on the reaction when ammonia is the substrate. The allosteric effector GTP functions by stabilizing the protein conformation that binds the tetrahedral intermediate(s) formed during glutamine hydrolysis. Inhibited by the product CTP, via allosteric rather than competitive inhibition. In terms of biological role, catalyzes the ATP-dependent amination of UTP to CTP with either L-glutamine or ammonia as the source of nitrogen. Regulates intracellular CTP levels through interactions with the four ribonucleotide triphosphates. The protein is CTP synthase of Francisella philomiragia subsp. philomiragia (strain ATCC 25017 / CCUG 19701 / FSC 153 / O#319-036).